The primary structure comprises 1110 residues: ATP-dependent DNA helicase MPH1 (1110 aa).

Positions 24–34 (LNEVSDSQTGR) are enriched in polar residues. Disordered stretches follow at residues 24–165 (LNEV…TNGK), 178–212 (FEEE…PVTN), and 236–305 (TETA…PTHH). Basic and acidic residues-rich tracts occupy residues 42 to 57 (NSHE…REIE) and 178 to 188 (FEEEQSARGDA). Over residues 189–199 (EMLDDSIEEPG) the composition is skewed to acidic residues. Composition is skewed to polar residues over residues 246–273 (ISSQ…QTTL) and 287–300 (QPAT…SRNE). The 169-residue stretch at 331 to 499 (IAHRALFHNL…EVIDGLSISR (169 aa)) folds into the Helicase ATP-binding domain. Residue 344-351 (LPTGLGKT) participates in ATP binding. Residues 447-450 (DEAH) carry the DEAH box motif. The Helicase C-terminal domain occupies 675-846 (ILNHFLDAGG…RFTFHTDKSS (172 aa)). Disordered regions lie at residues 867-937 (ENSQ…PDLG), 1013-1055 (VGDP…RCGT), and 1069-1110 (NLAW…DVFE). The span at 879 to 890 (RSRAPKRPPKKF) shows a compositional bias: basic residues. Composition is skewed to basic and acidic residues over residues 891-900 (HMPDGVEKGF), 1041-1055 (QSRE…RCGT), and 1077-1093 (EAPR…DQKP).

It belongs to the DEAD box helicase family. DEAH subfamily. FANCM sub-subfamily. In terms of assembly, interacts with the MHF histone-fold complex to form the FANCM-MHF complex.

The protein resides in the nucleus. The catalysed reaction is ATP + H2O = ADP + phosphate + H(+). Its function is as follows. ATP-dependent DNA helicase involved in DNA damage repair by homologous recombination and in genome maintenance. Capable of unwinding D-loops. Plays a role in limiting crossover recombinants during mitotic DNA double-strand break (DSB) repair. Component of a FANCM-MHF complex which promotes gene conversion at blocked replication forks, probably by reversal of the stalled fork. The chain is ATP-dependent DNA helicase MPH1 from Coccidioides immitis (strain RS) (Valley fever fungus).